The following is a 455-amino-acid chain: Phosphoglucosamine mutase (455 aa).

Catalysis depends on Ser-104, which acts as the Phosphoserine intermediate. Residues Ser-104, Asp-253, Asp-255, and Asp-257 each contribute to the Mg(2+) site. Ser-104 carries the phosphoserine modification.

This sequence belongs to the phosphohexose mutase family. Requires Mg(2+) as cofactor. Activated by phosphorylation.

The enzyme catalyses alpha-D-glucosamine 1-phosphate = D-glucosamine 6-phosphate. Its function is as follows. Catalyzes the conversion of glucosamine-6-phosphate to glucosamine-1-phosphate. The protein is Phosphoglucosamine mutase of Psychrobacter cryohalolentis (strain ATCC BAA-1226 / DSM 17306 / VKM B-2378 / K5).